A 23-amino-acid chain; its full sequence is Alpha-conotoxin-like RgIB (23 aa).

2 disulfide bridges follow: Cys-5/Cys-11 and Cys-6/Cys-19. The lacks the Ser-Xaa-Pro motif that is crucial for potent interaction with nAChR stretch occupies residues 7 to 9 (KNP).

Expressed by venom duct.

The protein resides in the secreted. Functionally, alpha-conotoxins act on postsynaptic membranes, they bind to the nicotinic acetylcholine receptors (nAChR) and thus inhibit them. Is a specific blocker of the alpha-3-beta-4/CHRNA3-CHRNB4 image nAChR and may also block alpha-3-beta-4-alpha-5 (CHRNA3-CHRNB4-CHRNA5) channels. Has possibly a distinct nAChR binding mode from other alpha-conotoxins, due to a different three residue motif (lacks the Ser-Xaa-Pro motif). In vivo, causes hyperactivity and behavioral disorders in mice following intracranial injection. This is Alpha-conotoxin-like RgIB from Conus regius (Crown cone).